We begin with the raw amino-acid sequence, 351 residues long: MRQQELIQKLLAGADLSAQEMEACIDSIMENRFTDAGTGAILALLQKKGVTPTEAIGAYENLMTRVTPITLPAHAVDTCGTGGDHRGTFNISTAAAFIAAGAGVPIAKHGNRSITSKCGSADVLEALGYRVDLPASATEEQFRETGFAFLFAPLYHPSMKAVASIRRELGIRTLFNLLGPLINPAKVKRQFIGVFDPSVMELYADVLIHAGCQHAMIVHGKTEHGDGLDEASVSGPTTIIELFEGRLCHHTVNPEDFGLNRWSIDELAGGDAETNAQIIRQILDGSATQAQIDAALFASAITCYVSGMGSCIDEGMSMSKESLESLAAMENMNRIIEVNNRLAEECNTHEG.

Residues Gly80, 83–84 (GD), Thr88, 90–93 (NIST), 108–116 (KHGNRSITS), and Ser120 each bind 5-phospho-alpha-D-ribose 1-diphosphate. Gly80 is a binding site for anthranilate. Ser92 provides a ligand contact to Mg(2+). Position 111 (Asn111) interacts with anthranilate. Arg166 is an anthranilate binding site. Residues Asp229 and Glu230 each contribute to the Mg(2+) site.

It belongs to the anthranilate phosphoribosyltransferase family. As to quaternary structure, homodimer. It depends on Mg(2+) as a cofactor.

The enzyme catalyses N-(5-phospho-beta-D-ribosyl)anthranilate + diphosphate = 5-phospho-alpha-D-ribose 1-diphosphate + anthranilate. It participates in amino-acid biosynthesis; L-tryptophan biosynthesis; L-tryptophan from chorismate: step 2/5. Functionally, catalyzes the transfer of the phosphoribosyl group of 5-phosphorylribose-1-pyrophosphate (PRPP) to anthranilate to yield N-(5'-phosphoribosyl)-anthranilate (PRA). This chain is Anthranilate phosphoribosyltransferase, found in Chlorobaculum parvum (strain DSM 263 / NCIMB 8327) (Chlorobium vibrioforme subsp. thiosulfatophilum).